We begin with the raw amino-acid sequence, 344 residues long: Isopentenyl-diphosphate delta-isomerase (344 aa).

Residue 9-10 participates in substrate binding; it reads RK. Residues 65 to 67, Ser-95, and Asn-124 each bind FMN; that span reads AMT. Gln-154 is a binding site for substrate. Residue Glu-155 coordinates Mg(2+). FMN-binding positions include Lys-185, Thr-215, 259 to 261, and 280 to 281; these read GVR and SG.

Belongs to the IPP isomerase type 2 family. As to quaternary structure, homooctamer. Dimer of tetramers. The cofactor is FMN. NADPH serves as cofactor. Mg(2+) is required as a cofactor.

The protein localises to the cytoplasm. It catalyses the reaction isopentenyl diphosphate = dimethylallyl diphosphate. Functionally, involved in the biosynthesis of isoprenoids. Catalyzes the 1,3-allylic rearrangement of the homoallylic substrate isopentenyl (IPP) to its allylic isomer, dimethylallyl diphosphate (DMAPP). This Lacticaseibacillus casei (strain BL23) (Lactobacillus casei) protein is Isopentenyl-diphosphate delta-isomerase.